The sequence spans 427 residues: Trigger factor (427 aa).

The PPIase FKBP-type domain occupies 163–248; it reads GNIAIIDFKG…VKGIKVKELP (86 aa).

The protein belongs to the FKBP-type PPIase family. Tig subfamily.

The protein resides in the cytoplasm. The catalysed reaction is [protein]-peptidylproline (omega=180) = [protein]-peptidylproline (omega=0). In terms of biological role, involved in protein export. Acts as a chaperone by maintaining the newly synthesized protein in an open conformation. Functions as a peptidyl-prolyl cis-trans isomerase. The sequence is that of Trigger factor from Clostridium botulinum (strain Alaska E43 / Type E3).